A 1690-amino-acid polypeptide reads, in one-letter code: DNA-directed RNA polymerase subunit beta' (1690 aa).

Zn(2+) contacts are provided by cysteine 63, cysteine 65, cysteine 78, and cysteine 81. Residues aspartate 753, aspartate 755, and aspartate 757 each coordinate Mg(2+). Zn(2+) is bound by residues cysteine 1107, cysteine 1295, cysteine 1302, and cysteine 1305.

Belongs to the RNA polymerase beta' chain family. The RNAP catalytic core consists of 2 alpha, 1 beta, 1 beta' and 1 omega subunit. When a sigma factor is associated with the core the holoenzyme is formed, which can initiate transcription. Mg(2+) serves as cofactor. Requires Zn(2+) as cofactor.

It catalyses the reaction RNA(n) + a ribonucleoside 5'-triphosphate = RNA(n+1) + diphosphate. Functionally, DNA-dependent RNA polymerase catalyzes the transcription of DNA into RNA using the four ribonucleoside triphosphates as substrates. This chain is DNA-directed RNA polymerase subunit beta', found in Thermotoga petrophila (strain ATCC BAA-488 / DSM 13995 / JCM 10881 / RKU-1).